The primary structure comprises 275 residues: Tumor necrosis factor receptor superfamily member 14 (275 aa).

An N-terminal signal peptide occupies residues 1–38 (MEPLPGWGSAPWSQAPTDNTFRLVPCVFLLNLLQRISA). 3 TNFR-Cys repeats span residues 41-75 (SCRQ…GTVC), 77-119 (PCPP…DTVC), and 120-162 (RCIP…DTVC). 8 cysteine pairs are disulfide-bonded: C42–C53, C54–C67, C57–C75, C78–C93, C96–C111, C99–C119, C121–C138, and C144–C162. N-linked (GlcNAc...) asparagine glycans are attached at residues N184 and N197. The chain crosses the membrane as a helical span at residues 211 to 231 (VVSILLPLVIVGAGIAGFLIC).

Belongs to the tumor necrosis factor receptor superfamily. In terms of assembly, interacts with TRAF2, TRAF3 and TRAF5. Interacts (via CRD1/TNFR-Cys 1) with CD160; this interaction is direct. Interacts (via CRD1/TNFR-Cys 1) with BTLA; this interaction is direct. N-glycosylated. As to expression, expressed at mucosal sites including colon and pulmonary epithelial cells. Expressed in naive T cells.

Its subcellular location is the cell membrane. In terms of biological role, receptor for four distinct ligands: The TNF superfamily members TNFSF14/LIGHT and homotrimeric LTA/lymphotoxin-alpha and the immunoglobulin superfamily members BTLA and CD160, altogether defining a complex stimulatory and inhibitory signaling network. Signals via the TRAF2-TRAF3 E3 ligase pathway to promote immune cell survival and differentiation. Participates in bidirectional cell-cell contact signaling between antigen presenting cells and lymphocytes. In response to ligation of TNFSF14/LIGHT, delivers costimulatory signals to T cells, promoting cell proliferation and effector functions. Interacts with CD160 on NK cells, enhancing IFNG production and anti-tumor immune response. In the context of bacterial infection, acts as a signaling receptor on epithelial cells for CD160 from intraepithelial lymphocytes, triggering the production of antimicrobial proteins and pro-inflammatory cytokines. Upon binding to CD160 on activated CD4+ T cells, down-regulates CD28 costimulatory signaling, restricting memory and alloantigen-specific immune response. May interact in cis (on the same cell) or in trans (on other cells) with BTLA. In cis interactions, appears to play an immune regulatory role inhibiting in trans interactions in naive T cells to maintain a resting state. In trans interactions, can predominate during adaptive immune response to provide survival signals to effector T cells. The sequence is that of Tumor necrosis factor receptor superfamily member 14 from Mus musculus (Mouse).